We begin with the raw amino-acid sequence, 513 residues long: RNA-splicing ligase RtcB homolog (513 aa).

Mn(2+) contacts are provided by aspartate 127, cysteine 130, histidine 235, histidine 267, and histidine 361. A GMP-binding site is contributed by 234–238 (NHYAE). GMP contacts are provided by residues 361 to 362 (HN), 410 to 413 (GGTM), serine 417, 436 to 439 (HGAG), and lysine 512. The active-site GMP-histidine intermediate is the histidine 436.

This sequence belongs to the RtcB family. In terms of assembly, catalytic component of the tRNA-splicing ligase complex. It depends on Mn(2+) as a cofactor.

It carries out the reaction a 3'-end 3'-phospho-ribonucleotide-RNA + a 5'-end dephospho-ribonucleoside-RNA + GTP = a ribonucleotidyl-ribonucleotide-RNA + GMP + diphosphate. The catalysed reaction is a 3'-end 2',3'-cyclophospho-ribonucleotide-RNA + a 5'-end dephospho-ribonucleoside-RNA + GTP + H2O = a ribonucleotidyl-ribonucleotide-RNA + GMP + diphosphate + H(+). In terms of biological role, catalytic subunit of the tRNA-splicing ligase complex that acts by directly joining spliced tRNA halves to mature-sized tRNAs by incorporating the precursor-derived splice junction phosphate into the mature tRNA as a canonical 3',5'-phosphodiester. May act as an RNA ligase with broad substrate specificity, and may function toward other RNAs. The protein is RNA-splicing ligase RtcB homolog of Micromonas commoda (strain RCC299 / NOUM17 / CCMP2709) (Picoplanktonic green alga).